The primary structure comprises 463 residues: MAVTGGGRPAVRQQAARGKQMQRTFNNVKITLICGFITLLVLRGTVGINLLTYGVGGGGGSDAVAAAEEARVVEDIERILREIRSDTDDDDDDEEEEPLGVDASTTTTTNSTTTTATAARRRSSNHTYTLGPKVTRWNAKRRQWLSRNPGFPSRDARGKPRILLVTGSQPAPCDDAAGDHYLLKATKNKIDYCRIHGIEIVHSMAHLDRELAGYWAKLPLLRRLMLSHPEVEWVWWMDSDALFTDMAFELPLARYDTSNLVIHGYPELLFAKRSWIALNTGSFLLRNCQWSLELLDAWAPMGPKGRVRDEAGKVLTASLTGRPAFEADDQSALIHILLTQKERWMEKVYVEDKYFLHGFWAGLVDKYEEMMERHHPGLGDERWPFVTHFVGCKPCGGYGDYPRERCLGGMERAFNFADNQVLRLYGFRHRSLASARVRRVANRTDNPLVNKEAALKMDAKIES.

Residues methionine 1–threonine 24 are Cytoplasmic-facing. The helical; Signal-anchor for type II membrane protein transmembrane segment at phenylalanine 25 to glycine 47 threads the bilayer. Residues isoleucine 48 to serine 463 are Lumenal-facing. Residues glutamate 82–asparagine 125 form a disordered region. Acidic residues predominate over residues threonine 87 to leucine 99. Residues alanine 103–alanine 118 show a composition bias toward low complexity. Asparagine 110, asparagine 125, and asparagine 442 each carry an N-linked (GlcNAc...) asparagine glycan.

It belongs to the glycosyltransferase 34 family.

Its subcellular location is the golgi apparatus membrane. Probable glycosyltransferase that may be involved in the biosynthesis of xyloglucan. In Oryza sativa subsp. japonica (Rice), this protein is Probable glycosyltransferase 3.